We begin with the raw amino-acid sequence, 187 residues long: Homeobox expressed in ES cells 1-B (187 aa).

Positions 110–169 (GRRPRTAFTRSQIEILENVFRVNSYPGIDVREELASKLALDEDRIQIWFQNRRAKLKRSH) form a DNA-binding region, homeobox.

The protein belongs to the ANF homeobox family. As to quaternary structure, the N-terminus interacts with the LIM 2 domain of zyx. As to expression, first expressed at a low level in the late blastula stage (stage 9) in most cells of the animal half of the embryo. Following this, predominantly expressed in two zones; the dorsal blastopore lip (Spemann organizer) at the beginning of gastrulation, and subsequently in the anterior part of the neural anlage (the region of future forebrain).

The protein localises to the nucleus. Functionally, regulates the earliest stages of development of the anterior neural plate. Plays a role in forebrain development by inhibiting the expression of otx2 and pax6 in the rostral region of the anterior neural plate. Necessary for both neural differentiation and neural patterning. Controls Spemann organizer development. May act as a transcriptional repressor. This is Homeobox expressed in ES cells 1-B (hesx1-b) from Xenopus laevis (African clawed frog).